The following is a 123-amino-acid chain: Ribosome-binding factor A (123 aa).

The protein belongs to the RbfA family. In terms of assembly, monomer. Binds 30S ribosomal subunits, but not 50S ribosomal subunits or 70S ribosomes.

Its subcellular location is the cytoplasm. One of several proteins that assist in the late maturation steps of the functional core of the 30S ribosomal subunit. Associates with free 30S ribosomal subunits (but not with 30S subunits that are part of 70S ribosomes or polysomes). Required for efficient processing of 16S rRNA. May interact with the 5'-terminal helix region of 16S rRNA. This chain is Ribosome-binding factor A, found in Ralstonia nicotianae (strain ATCC BAA-1114 / GMI1000) (Ralstonia solanacearum).